Here is a 115-residue protein sequence, read N- to C-terminus: Protein SPIRAL1-like 2 (115 aa).

Residues 29–48 (AKAKPAAAAEKETTPAPVKK) are disordered.

The protein belongs to the SPIRAL1 family.

Its function is as follows. Acts in maintaining the cortical microtubules organization essential for anisotropic cell growth. This Oryza sativa subsp. japonica (Rice) protein is Protein SPIRAL1-like 2.